Here is a 369-residue protein sequence, read N- to C-terminus: Probable dual-specificity RNA methyltransferase RlmN (369 aa).

The active-site Proton acceptor is E108. Positions 114-352 constitute a Radical SAM core domain; it reads YPDRATLCIS…CTVRDTKGQE (239 aa). C121 and C357 form a disulfide bridge. C128, C132, and C135 together coordinate [4Fe-4S] cluster. Residues 178-179, S212, 235-237, and N314 each bind S-adenosyl-L-methionine; these read GE and SLH. C357 acts as the S-methylcysteine intermediate in catalysis.

It belongs to the radical SAM superfamily. RlmN family. It depends on [4Fe-4S] cluster as a cofactor.

The protein resides in the cytoplasm. The enzyme catalyses adenosine(2503) in 23S rRNA + 2 reduced [2Fe-2S]-[ferredoxin] + 2 S-adenosyl-L-methionine = 2-methyladenosine(2503) in 23S rRNA + 5'-deoxyadenosine + L-methionine + 2 oxidized [2Fe-2S]-[ferredoxin] + S-adenosyl-L-homocysteine. The catalysed reaction is adenosine(37) in tRNA + 2 reduced [2Fe-2S]-[ferredoxin] + 2 S-adenosyl-L-methionine = 2-methyladenosine(37) in tRNA + 5'-deoxyadenosine + L-methionine + 2 oxidized [2Fe-2S]-[ferredoxin] + S-adenosyl-L-homocysteine. Specifically methylates position 2 of adenine 2503 in 23S rRNA and position 2 of adenine 37 in tRNAs. The polypeptide is Probable dual-specificity RNA methyltransferase RlmN (Corynebacterium efficiens (strain DSM 44549 / YS-314 / AJ 12310 / JCM 11189 / NBRC 100395)).